The following is a 1399-amino-acid chain: DNA-directed RNA polymerase subunit beta' (1399 aa).

Zn(2+) contacts are provided by Cys-70, Cys-72, Cys-85, and Cys-88. Mg(2+)-binding residues include Asp-460, Asp-462, and Asp-464. Positions 814, 888, 895, and 898 each coordinate Zn(2+). The segment at 1367–1399 (SERKRQRDLGKPQRVSASEAEAALTEALNSSGN) is disordered. The span at 1382–1399 (SASEAEAALTEALNSSGN) shows a compositional bias: low complexity.

This sequence belongs to the RNA polymerase beta' chain family. In terms of assembly, the RNAP catalytic core consists of 2 alpha, 1 beta, 1 beta' and 1 omega subunit. When a sigma factor is associated with the core the holoenzyme is formed, which can initiate transcription. The cofactor is Mg(2+). Zn(2+) is required as a cofactor.

The catalysed reaction is RNA(n) + a ribonucleoside 5'-triphosphate = RNA(n+1) + diphosphate. DNA-dependent RNA polymerase catalyzes the transcription of DNA into RNA using the four ribonucleoside triphosphates as substrates. The polypeptide is DNA-directed RNA polymerase subunit beta' (Pseudomonas paraeruginosa (strain DSM 24068 / PA7) (Pseudomonas aeruginosa (strain PA7))).